Here is a 262-residue protein sequence, read N- to C-terminus: Adenosylcobinamide-GDP ribazoletransferase (262 aa).

The next 8 helical transmembrane spans lie at 4–26 (AWNG…SIAW), 37–57 (CMPL…ALFS), 59–79 (FSFS…IWMA), 112–132 (VGAF…LFLY), 139–159 (IPPA…AWLL), 183–203 (AIWA…STAI), 205–225 (VQTG…AKPW), and 237–257 (VLGA…WLLH).

This sequence belongs to the CobS family. Mg(2+) is required as a cofactor.

The protein resides in the cell membrane. The catalysed reaction is alpha-ribazole + adenosylcob(III)inamide-GDP = adenosylcob(III)alamin + GMP + H(+). The enzyme catalyses alpha-ribazole 5'-phosphate + adenosylcob(III)inamide-GDP = adenosylcob(III)alamin 5'-phosphate + GMP + H(+). Its pathway is cofactor biosynthesis; adenosylcobalamin biosynthesis; adenosylcobalamin from cob(II)yrinate a,c-diamide: step 7/7. Joins adenosylcobinamide-GDP and alpha-ribazole to generate adenosylcobalamin (Ado-cobalamin). Also synthesizes adenosylcobalamin 5'-phosphate from adenosylcobinamide-GDP and alpha-ribazole 5'-phosphate. The protein is Adenosylcobinamide-GDP ribazoletransferase of Geobacillus kaustophilus (strain HTA426).